A 354-amino-acid polypeptide reads, in one-letter code: 3-dehydroquinate synthase (354 aa).

NAD(+) contacts are provided by residues 66–71, 100–104, 124–125, lysine 136, lysine 145, and 163–166; these read SGETSK, GATGD, TT, and FLET. Positions 178, 242, and 256 each coordinate Zn(2+).

This sequence belongs to the sugar phosphate cyclases superfamily. Dehydroquinate synthase family. It depends on NAD(+) as a cofactor. Requires Co(2+) as cofactor. Zn(2+) is required as a cofactor.

Its subcellular location is the cytoplasm. The enzyme catalyses 7-phospho-2-dehydro-3-deoxy-D-arabino-heptonate = 3-dehydroquinate + phosphate. It functions in the pathway metabolic intermediate biosynthesis; chorismate biosynthesis; chorismate from D-erythrose 4-phosphate and phosphoenolpyruvate: step 2/7. Its function is as follows. Catalyzes the conversion of 3-deoxy-D-arabino-heptulosonate 7-phosphate (DAHP) to dehydroquinate (DHQ). This is 3-dehydroquinate synthase from Staphylococcus epidermidis (strain ATCC 35984 / DSM 28319 / BCRC 17069 / CCUG 31568 / BM 3577 / RP62A).